The sequence spans 428 residues: MTNRTAYFYDPDVGNFHYGAGHPMKPHRLSLTHSLVLHYGLYKKMMVFKPYKASQHDMCRFHSEDYIDFLQKVSPNNMQGFTKSLNTFNVGGDCPVFPGLFEFCSRYTGASLQGATQLNHKICDIAINWAGGLHHAKKFEASGFCYVNDIVISILELLKYHPRVLYIDIDIHHGDGVQEAFYLTDRVMTVSFHKYGNYFFPGTGDMYEVGAESGRYYCLNVPLRDGIDDQSYRQLFQPVIKQVVDFYQPTCIVLQCGADSLGCDRLGCFNLSIRGHGECVEFVKGFKIPLLVLGGGGYTVRNVARCWTFETSLLVEESISDELPYSEYFEYFAPDFTLHPDVSTRIENQNSRQYLEQIRQTVFENLKMLNHAPSVQIRDVPSDLLSYERPDEADPEERGSEENFSRPEAANEFYDGDHDHDKESDVEI.

The interval 3-316 (NRTAYFYDPD…WTFETSLLVE (314 aa)) is histone deacetylase. 1D-myo-inositol 1,4,5,6-tetrakisphosphate contacts are provided by His-17, Gly-21, and Lys-25. The active site involves His-135. The Zn(2+) site is built by Asp-170, His-172, and Asp-259. Arg-265 is a binding site for 1D-myo-inositol 1,4,5,6-tetrakisphosphate. Residues 381–428 (PSDLLSYERPDEADPEERGSEENFSRPEAANEFYDGDHDHDKESDVEI) are disordered. Basic and acidic residues-rich tracts occupy residues 386–405 (SYERPDEADPEERGSEENFS) and 415–428 (DGDHDHDKESDVEI).

This sequence belongs to the histone deacetylase family. HD type 1 subfamily.

It localises to the nucleus. It is found in the chromosome. The protein localises to the cytoplasm. Its subcellular location is the cytosol. The enzyme catalyses N(6)-acetyl-L-lysyl-[histone] + H2O = L-lysyl-[histone] + acetate. The catalysed reaction is N(6)-acetyl-L-lysyl-[protein] + H2O = L-lysyl-[protein] + acetate. It carries out the reaction N(6)-(2E)-butenoyl-L-lysyl-[protein] + H2O = (2E)-2-butenoate + L-lysyl-[protein]. It catalyses the reaction N(6)-(2-hydroxyisobutanoyl)-L-lysyl-[protein] + H2O = 2-hydroxy-2-methylpropanoate + L-lysyl-[protein]. The enzyme catalyses N(6)-[(S)-lactoyl]-L-lysyl-[protein] + H2O = (S)-lactate + L-lysyl-[protein]. Its activity is regulated as follows. Inositol tetraphosphate (1D-myo-inositol 1,4,5,6-tetrakisphosphate) promotes the histone deacetylase activity by acting as an intermolecular glue between hdac3 and N-Cor repressor complex components. Its function is as follows. Histone deacetylase that catalyzes the deacetylation of lysine residues on the N-terminal part of the core histones (H2A, H2B, H3 and H4), and some other non-histone substrates. Histone deacetylation gives a tag for epigenetic repression and plays an important role in transcriptional regulation, cell cycle progression and developmental events. Histone deacetylases act via the formation of large multiprotein complexes, such as N-Cor repressor complex, which activate the histone deacetylase activity. Participates in the BCL6 transcriptional repressor activity by deacetylating the H3 'Lys-27' (H3K27) on enhancer elements, antagonizing EP300 acetyltransferase activity and repressing proximal gene expression. Also functions as a deacetylase for non-histone targets. In addition to protein deacetylase activity, also acts as a protein-lysine deacylase by recognizing other acyl groups: catalyzes removal of (2E)-butenoyl (crotonyl), lactoyl (lactyl) and 2-hydroxyisobutanoyl (2-hydroxyisobutyryl) acyl groups from lysine residues, leading to protein decrotonylation, delactylation and de-2-hydroxyisobutyrylation, respectively. The sequence is that of Histone deacetylase 3 (hdac3) from Danio rerio (Zebrafish).